The sequence spans 385 residues: 8-amino-7-oxononanoate synthase (385 aa).

Residue arginine 21 coordinates substrate. A pyridoxal 5'-phosphate-binding site is contributed by 108–109; it reads GF. Residue histidine 133 coordinates substrate. Pyridoxal 5'-phosphate-binding residues include serine 179, histidine 207, and threonine 233. The residue at position 236 (lysine 236) is an N6-(pyridoxal phosphate)lysine. Threonine 352 contributes to the substrate binding site.

The protein belongs to the class-II pyridoxal-phosphate-dependent aminotransferase family. BioF subfamily. Homodimer. The cofactor is pyridoxal 5'-phosphate.

The catalysed reaction is 6-carboxyhexanoyl-[ACP] + L-alanine + H(+) = (8S)-8-amino-7-oxononanoate + holo-[ACP] + CO2. Its pathway is cofactor biosynthesis; biotin biosynthesis. In terms of biological role, catalyzes the decarboxylative condensation of pimeloyl-[acyl-carrier protein] and L-alanine to produce 8-amino-7-oxononanoate (AON), [acyl-carrier protein], and carbon dioxide. The sequence is that of 8-amino-7-oxononanoate synthase from Pseudescherichia vulneris (Escherichia vulneris).